Consider the following 129-residue polypeptide: Lysozyme C (129 aa).

The 129-residue stretch at 1–129 folds into the C-type lysozyme domain; that stretch reads KVFSKCELAH…LSEYLASCNL (129 aa). Intrachain disulfides connect Cys-6-Cys-127, Cys-30-Cys-115, Cys-65-Cys-80, and Cys-76-Cys-94. Active-site residues include Glu-35 and Asp-53. Ca(2+)-binding residues include Lys-82, Asp-85, Asn-87, Asp-90, and Asp-91.

The protein belongs to the glycosyl hydrolase 22 family. Monomer. Requires Ca(2+) as cofactor.

The catalysed reaction is Hydrolysis of (1-&gt;4)-beta-linkages between N-acetylmuramic acid and N-acetyl-D-glucosamine residues in a peptidoglycan and between N-acetyl-D-glucosamine residues in chitodextrins.. Functionally, lysozymes have primarily a bacteriolytic function; those in tissues and body fluids are associated with the monocyte-macrophage system and enhance the activity of immunoagents. The polypeptide is Lysozyme C (LYZ) (Equus asinus (Donkey)).